The primary structure comprises 149 residues: Vesicle-associated protein 3-1 (149 aa).

Residue M1 is modified to N-acetylmethionine. Position 2 is an N-acetylserine; in Vesicle-associated protein 3-1, N-terminally processed (S2). One can recognise an MSP domain in the interval 6–126 (LLEIEPMYLQ…EETKLRVTYV (121 aa)).

This sequence belongs to the VAMP-associated protein (VAP) (TC 9.B.17) family.

Its function is as follows. May play a role in vesicle trafficking. The protein is Vesicle-associated protein 3-1 (PVA31) of Arabidopsis thaliana (Mouse-ear cress).